We begin with the raw amino-acid sequence, 434 residues long: Glutamyl-tRNA reductase (434 aa).

Substrate contacts are provided by residues T49–R52, S109, E114–Q116, and Q120. Catalysis depends on C50, which acts as the Nucleophile. Residue G189–C194 participates in NADP(+) binding.

Belongs to the glutamyl-tRNA reductase family. As to quaternary structure, homodimer.

The enzyme catalyses (S)-4-amino-5-oxopentanoate + tRNA(Glu) + NADP(+) = L-glutamyl-tRNA(Glu) + NADPH + H(+). It participates in porphyrin-containing compound metabolism; protoporphyrin-IX biosynthesis; 5-aminolevulinate from L-glutamyl-tRNA(Glu): step 1/2. Its function is as follows. Catalyzes the NADPH-dependent reduction of glutamyl-tRNA(Glu) to glutamate 1-semialdehyde (GSA). The sequence is that of Glutamyl-tRNA reductase from Geotalea daltonii (strain DSM 22248 / JCM 15807 / FRC-32) (Geobacter daltonii).